Here is a 209-residue protein sequence, read N- to C-terminus: Uracil phosphoribosyltransferase (209 aa).

5-phospho-alpha-D-ribose 1-diphosphate contacts are provided by residues arginine 79, arginine 104, and 131 to 139 (DPMLATGNS). Residues isoleucine 194 and 199–201 (GDA) contribute to the uracil site. Aspartate 200 is a 5-phospho-alpha-D-ribose 1-diphosphate binding site.

Belongs to the UPRTase family. Mg(2+) is required as a cofactor.

The enzyme catalyses UMP + diphosphate = 5-phospho-alpha-D-ribose 1-diphosphate + uracil. The protein operates within pyrimidine metabolism; UMP biosynthesis via salvage pathway; UMP from uracil: step 1/1. With respect to regulation, allosterically activated by GTP. In terms of biological role, catalyzes the conversion of uracil and 5-phospho-alpha-D-ribose 1-diphosphate (PRPP) to UMP and diphosphate. The protein is Uracil phosphoribosyltransferase of Sinorhizobium fredii (strain NBRC 101917 / NGR234).